The chain runs to 197 residues: Holliday junction branch migration complex subunit RuvA (197 aa).

The interval 1–63 (MFEYLNGKLV…EDAHSLYGFV (63 aa)) is domain I. The segment at 64–142 (NESEKALFLR…ATGAVGISLL (79 aa)) is domain II. Positions 142–146 (LDAAP) are flexible linker. A domain III region spans residues 147–197 (AGNLALEEAIEALQALGYKATELKKIEKKLEQEAGLTSEEYIKSALKLMMK).

Belongs to the RuvA family. Homotetramer. Forms an RuvA(8)-RuvB(12)-Holliday junction (HJ) complex. HJ DNA is sandwiched between 2 RuvA tetramers; dsDNA enters through RuvA and exits via RuvB. An RuvB hexamer assembles on each DNA strand where it exits the tetramer. Each RuvB hexamer is contacted by two RuvA subunits (via domain III) on 2 adjacent RuvB subunits; this complex drives branch migration. In the full resolvosome a probable DNA-RuvA(4)-RuvB(12)-RuvC(2) complex forms which resolves the HJ.

The protein localises to the cytoplasm. In terms of biological role, the RuvA-RuvB-RuvC complex processes Holliday junction (HJ) DNA during genetic recombination and DNA repair, while the RuvA-RuvB complex plays an important role in the rescue of blocked DNA replication forks via replication fork reversal (RFR). RuvA specifically binds to HJ cruciform DNA, conferring on it an open structure. The RuvB hexamer acts as an ATP-dependent pump, pulling dsDNA into and through the RuvAB complex. HJ branch migration allows RuvC to scan DNA until it finds its consensus sequence, where it cleaves and resolves the cruciform DNA. The polypeptide is Holliday junction branch migration complex subunit RuvA (Lactococcus lactis subsp. cremoris (strain SK11)).